The chain runs to 247 residues: Chaperone protein NfaE (247 aa).

The signal sequence occupies residues 1–29; the sequence is MKMRAVAVFTGMLTGVLSVTGLLSAGAYA. The interval 106-125 is disordered; sequence GQQSSRRRSVSTGGEFPSDR.

This sequence belongs to the periplasmic pilus chaperone family.

It is found in the periplasm. Involved in the biogenesis of the NFA-I adhesin. In Escherichia coli, this protein is Chaperone protein NfaE (nfaE).